Reading from the N-terminus, the 893-residue chain is Dystroglycan 1 (893 aa).

Positions 1–27 (MSVDNWLLHPLWGQTFLLLLSVAVAQA) are cleaved as a signal peptide. Residues 28 to 406 (HWPSEPSEAV…GQIRPTLTIP (379 aa)) are required for laminin recognition. Residues 47 to 69 (SMHSVLSDFQEAVPTVVGIPDGT) are O-glycosylated at one site. N-linked (GlcNAc...) asparagine glycosylation occurs at Asn-139. A disulfide bridge links Cys-180 with Cys-262. The interval 314–483 (ATPTPVTAIG…PPTRIRTTTS (170 aa)) is mucin-like domain. Residues Thr-315, Thr-317, and Thr-377 are each glycosylated (O-linked (Man6P...) threonine). The disordered stretch occupies residues 379-498 (TLGPIQPTRV…GEPNQRPELK (120 aa)). The span at 409 to 445 (VEPTAVITPPTTTTKKPRVSTPKPATPSTDSSTTTTR) shows a compositional bias: low complexity. An O-glycosylated at seven sites with GalNAc region spans residues 461–483 (TTKAPITRLETASPPTRIRTTTS). The Peptidase S72 domain maps to 601 to 710 (KAPARFKARL…LSIAVTGSGS (110 aa)). 3 N-linked (GlcNAc...) asparagine glycosylation sites follow: Asn-639, Asn-647, and Asn-659. The Extracellular segment spans residues 652–751 (SIVVEWTNNT…SSEDDVYLHT (100 aa)). Residues Cys-667 and Cys-711 are joined by a disulfide bond. Positions 722 to 744 (PSPGSSAAPATEVPDRDPEKSSE) are disordered. Residues 734–744 (VPDRDPEKSSE) are compositionally biased toward basic and acidic residues. A helical membrane pass occupies residues 752–772 (VIPAVVVAAILLIAGIIAMIC). Topologically, residues 773-893 (YRKKRKGKLT…YRSPPPYVPP (121 aa)) are cytoplasmic. The short motif at 774-780 (RKKRKGK) is the Nuclear localization signal element. A Phosphothreonine modification is found at Thr-788. The tract at residues 817–893 (LQEEKAPLPP…YRSPPPYVPP (77 aa)) is required for interaction with CAV3. The interval 821–893 (KAPLPPPEYP…YRSPPPYVPP (73 aa)) is disordered. The segment covering 830–844 (PNQSMPETTPLNQDT) has biased composition (polar residues). Pro residues predominate over residues 857–868 (NAPPYQPPPPFT). Residues 878-893 (PKNMTPYRSPPPYVPP) are required for binding DMD and UTRN. A PPXY motif motif is present at residues 887–890 (PPPY). Phosphotyrosine; by SRC is present on Tyr-890.

As to quaternary structure, monomer. Heterodimer of alpha- and beta-dystroglycan subunits which are the central components of the dystrophin-glycoprotein complex. This complex then can form a dystrophin-associated glycoprotein complex (DGC) which is composed of three subcomplexes: a cytoplasmic complex comprised of DMD (or UTRN), DTNA and a number of syntrophins, such as SNTB1, SNTB2, SNTG1 and SNTG2, the transmembrane dystroglycan complex, and the sarcoglycan-sarcospan complex. Interacts (via the N-terminal of alphaDAG1) with LARGE1; the interaction enhances laminin binding. Interacts with SGCD. Interacts with AGR2 and AGR3. Interacts (betaDAG1) with DMD; the interaction is inhibited by phosphorylation on the PPXY motif. Interacts (betaDAG1, via its PPXY motif) with UTRN (via its WWW and ZZ domains); the interaction is inhibited by phosphorylation on the PPXY motif. Interacts (betaDAG1, via its phosphorylated PPXY motif) with the SH2 domain-containing proteins, FYN, CSK, NCK and SHC. Interacts (betaDAG1) with CAV3 (via a central WW-like domain); the interaction disrupts the binding of DMD. BetaDAG1 directly interacts with ANK3, but not with ANK2; this interaction does not interfere with DMD-binding and is required for retention at costameres. Identified in a dystroglycan complex that contains at least PRX, DRP2, UTRN, DMD and DAG1. Interacts with POMGNT1. BetaDAG1 interacts with CD93. Post-translationally, O-glycosylated. POMGNT1 catalyzes the initial addition of N-acetylglucosamine, giving rise to the GlcNAc(beta1-2)Man(alpha1-)O-Ser/Thr moiety and thus providing the necessary basis for the addition of further carbohydrate moieties. Heavily O-glycosylated comprising of up to two thirds of its mass and the carbohydrate composition differs depending on tissue type. Mucin-type O-glycosylation is important for ligand binding activity. O-mannosylation is found in high abundance in both brain and muscle where the most abundant glycan is Sia-alpha-2-3-Gal-beta-1-4-Glc-NAc-beta-1-2-Man. In muscle, glycosylation on Thr-315, Thr-317, Thr-379 by a phosphorylated O-mannosyl glycan with the structure 2-(N-acetylamido)-2-deoxygalactosyl-beta-1,3-2-(N-acetylamido)-2-deoxyglucosyl-beta-1,4-6-phosphomannose is mediated by like-acetylglucosaminyltransferase (LARGE1) protein amd is required for laminin binding. O-glycosylated in the N-terminal region with a core 1 or possibly core 8 glycan. The brain form displays a unique glycosylation pattern which is absent in other tissues; this form shows enhanced binding to laminin LAMA5 compared to the skeletal muscle form. N-glycosylated. In terms of processing, autolytic cleavage produces the alpha and beta subunits. In cutaneous cells, as well as in certain pathological conditions, shedding of beta-dystroglycan can occur releasing a peptide of about 30 kDa. Post-translationally, SRC-mediated phosphorylation of the PPXY motif of the beta subunit recruits SH2 domain-containing proteins, but inhibits binding to WWW domain-containing proteins, DMD and UTRN. This phosphorylation also inhibits nuclear entry. As to expression, detected in brain and kidney (at protein level). Detected in sciatic nerve (at protein level). Expressed in neurons and muscle cells (at protein level). Expressed in a variety of tissues. In brain, expressed in the hippocampal formation, the olfactory bulb, the cerebellum and the thalamus. In the peripheral nerve system, expressed in Schwann cells.

Its subcellular location is the secreted. The protein localises to the extracellular space. The protein resides in the cell membrane. It is found in the cytoplasm. It localises to the cytoskeleton. Its subcellular location is the nucleus. The protein localises to the nucleoplasm. The protein resides in the sarcolemma. It is found in the postsynaptic cell membrane. The dystroglycan complex is involved in a number of processes including laminin and basement membrane assembly, sarcolemmal stability, cell survival, peripheral nerve myelination, nodal structure, cell migration, and epithelial polarization. Its function is as follows. Extracellular peripheral glycoprotein that acts as a receptor for extracellular matrix proteins containing laminin-G domains, and for certain adenoviruses. Receptor for laminin-2 (LAMA2) and agrin in peripheral nerve Schwann cells. Also acts as a receptor for laminin LAMA5. In terms of biological role, transmembrane protein that plays important roles in connecting the extracellular matrix to the cytoskeleton. Acts as a cell adhesion receptor in both muscle and non-muscle tissues. Receptor for both DMD and UTRN and, through these interactions, scaffolds axin to the cytoskeleton. Also functions in cell adhesion-mediated signaling and implicated in cell polarity. This Mus musculus (Mouse) protein is Dystroglycan 1.